An 88-amino-acid chain; its full sequence is Meiosis expressed gene 1 protein homolog (88 aa).

Belongs to the MEIG1 family. Interacts with PACRG. Interacts with MORN3.

Functionally, essential for spermiogenesis. This Homo sapiens (Human) protein is Meiosis expressed gene 1 protein homolog.